The following is a 249-amino-acid chain: Segregation and condensation protein A (249 aa).

This sequence belongs to the ScpA family. Component of a cohesin-like complex composed of ScpA, ScpB and the Smc homodimer, in which ScpA and ScpB bind to the head domain of Smc. The presence of the three proteins is required for the association of the complex with DNA.

The protein resides in the cytoplasm. In terms of biological role, participates in chromosomal partition during cell division. May act via the formation of a condensin-like complex containing Smc and ScpB that pull DNA away from mid-cell into both cell halves. This Listeria monocytogenes serotype 4a (strain HCC23) protein is Segregation and condensation protein A.